The chain runs to 463 residues: Glutamyl-tRNA reductase (463 aa).

Substrate is bound by residues 49 to 52 (TCNR), serine 109, 114 to 116 (EQQ), and glutamine 120. Cysteine 50 acts as the Nucleophile in catalysis. 196-201 (GAGAMS) is an NADP(+) binding site.

It belongs to the glutamyl-tRNA reductase family. As to quaternary structure, homodimer.

It catalyses the reaction (S)-4-amino-5-oxopentanoate + tRNA(Glu) + NADP(+) = L-glutamyl-tRNA(Glu) + NADPH + H(+). It functions in the pathway porphyrin-containing compound metabolism; protoporphyrin-IX biosynthesis; 5-aminolevulinate from L-glutamyl-tRNA(Glu): step 1/2. Catalyzes the NADPH-dependent reduction of glutamyl-tRNA(Glu) to glutamate 1-semialdehyde (GSA). The polypeptide is Glutamyl-tRNA reductase (Corynebacterium glutamicum (strain R)).